The following is a 316-amino-acid chain: D-alanine--D-alanine ligase (316 aa).

The 197-residue stretch at 107–303 (KEVFAARGLT…FEDLVERILI (197 aa)) folds into the ATP-grasp domain. 133–188 (AEGFGYPVVVKPSQEGSSVGVSIVKSPEELPSALELAFRYDDDILVERFIKGREIQ) serves as a coordination point for ATP. Mg(2+) is bound by residues Asp-256, Glu-269, and Asn-271.

It belongs to the D-alanine--D-alanine ligase family. It depends on Mg(2+) as a cofactor. Requires Mn(2+) as cofactor.

It localises to the cytoplasm. It catalyses the reaction 2 D-alanine + ATP = D-alanyl-D-alanine + ADP + phosphate + H(+). The protein operates within cell wall biogenesis; peptidoglycan biosynthesis. Its function is as follows. Cell wall formation. The chain is D-alanine--D-alanine ligase from Geobacter sulfurreducens (strain ATCC 51573 / DSM 12127 / PCA).